A 127-amino-acid chain; its full sequence is Protein ApaG (127 aa).

Residues 3-127 (DDPRYRVEVE…FVLSVPRTLH (125 aa)) form the ApaG domain.

This is Protein ApaG from Xanthomonas axonopodis pv. citri (strain 306).